The sequence spans 354 residues: tRNA-specific 2-thiouridylase MnmA (354 aa).

ATP contacts are provided by residues 6–13 and Leu-33; that span reads LLSGGVDS. Cys-100 functions as the Nucleophile in the catalytic mechanism. An intrachain disulfide couples Cys-100 to Cys-195. Gly-123 serves as a coordination point for ATP. Residues 145–147 are interaction with tRNA; sequence KDQ. Cys-195 functions as the Cysteine persulfide intermediate in the catalytic mechanism.

Belongs to the MnmA/TRMU family.

It localises to the cytoplasm. The catalysed reaction is S-sulfanyl-L-cysteinyl-[protein] + uridine(34) in tRNA + AH2 + ATP = 2-thiouridine(34) in tRNA + L-cysteinyl-[protein] + A + AMP + diphosphate + H(+). Its function is as follows. Catalyzes the 2-thiolation of uridine at the wobble position (U34) of tRNA, leading to the formation of s(2)U34. This chain is tRNA-specific 2-thiouridylase MnmA, found in Borrelia recurrentis (strain A1).